Reading from the N-terminus, the 512-residue chain is Cytochrome P450 monooxygenase FrzL (512 aa).

The chain crosses the membrane as a helical span at residues 6 to 26 (TMLAFVPYLAVFVACYGLVYY). Cysteine 423 serves as a coordination point for heme.

Belongs to the cytochrome P450 family. Requires heme as cofactor.

It localises to the membrane. Its function is as follows. Cytochrome P450 monooxygenase; part of the gene cluster that mediates the biosynthesis of the alkaloid (-)-FR901483, a potent immunosuppressant that shows efficacy in animal models and a probable inhibitor of purine nucleotide biosynthesis by targeting phosphoribosylpyrophosphate amidotransferase (PPAT). The only unassigned enzyme in the cluster is the second cytochrome P450 monooxygenase FrzL. The biosynthesis of (-)-FR901483 starts with the condensation of two L-tyrosines to yield (S,S)-dityrosyl-piperazine. This process occurs in 3 steps with the non-canonical nonribosomal peptide synthetase FrzA catalyzing the reduction of L-tyrosine into L-tyrosinal, the spontaneous condensation of 2 L-tyrosinal units, and the subsequent reduction by the NmrA-like family domain-containing oxidoreductase FrzB. The cytochrome P450 monooxygenase FrzC then performs coupling between N10 and C1' to morph the piperazine into a 1,4-diazabicyclo[3.2.1]octane spiro-fused to a 2,5-cyclohexadienone. The dienone portion is further reduced to cyclohexanone by the flavin-dependent reductase FrzD. The methyltranserases (MTs) FrzE and FrzF are then involved in the methylation at the C10' amine and the C4 phenolic oxygen, respectively. The order of the two MTs appear to be interchangeable. Cleavage of the C9-N10' bond by the dioxygenase FrzG then leads to formation of a conjugated iminium. In addition to the oxidation of C9, an additional dehydrogenation between C7 and C8 can occur to give a likely shunt product. The next biosynthetic step is the intramolecular aldol condensation catalyzed by the newly identified aldolase FrzH to yield an aza-tricyclic product with the formation of a C9-C3' bond. The short-chain dehydrogenase/reductase FrzI then produces dephospho-(-)-FR901483 that is phosphorylated at C4'-OH into (-)-FR901483 by the phosphotransferase FrzJ. The sequence is that of Cytochrome P450 monooxygenase FrzL from Cladobotryum sp.